The primary structure comprises 239 residues: Glucosamine-6-phosphate deaminase (239 aa).

D62 acts as the Proton acceptor; for enolization step in catalysis. Catalysis depends on N128, which acts as the For ring-opening step. Residue H130 is the Proton acceptor; for ring-opening step of the active site. Residue E135 is the For ring-opening step of the active site.

This sequence belongs to the glucosamine/galactosamine-6-phosphate isomerase family. NagB subfamily.

The catalysed reaction is alpha-D-glucosamine 6-phosphate + H2O = beta-D-fructose 6-phosphate + NH4(+). The protein operates within amino-sugar metabolism; N-acetylneuraminate degradation; D-fructose 6-phosphate from N-acetylneuraminate: step 5/5. In terms of biological role, catalyzes the reversible isomerization-deamination of glucosamine 6-phosphate (GlcN6P) to form fructose 6-phosphate (Fru6P) and ammonium ion. This chain is Glucosamine-6-phosphate deaminase, found in Lactobacillus helveticus (strain DPC 4571).